The following is an 866-amino-acid chain: Probable outer membrane usher protein ElfC (866 aa).

Residues 1 to 35 (MYRTHRQHSLLSSGGVPSFIGGLVVFVSAAFNAQA) form the signal peptide.

The protein belongs to the fimbrial export usher family.

Its subcellular location is the cell outer membrane. In terms of biological role, part of the elfADCG-ycbUVF fimbrial operon, which promotes adhesion of bacteria to different abiotic surfaces. Could be involved in the export and assembly of the ElfA fimbrial subunits across the outer membrane. This Escherichia coli (strain K12) protein is Probable outer membrane usher protein ElfC (elfC).